We begin with the raw amino-acid sequence, 198 residues long: NADH-quinone oxidoreductase subunit B (198 aa).

4 residues coordinate [4Fe-4S] cluster: Cys-62, Cys-63, Cys-128, and Cys-158.

Belongs to the complex I 20 kDa subunit family. In terms of assembly, NDH-1 is composed of 14 different subunits. Subunits NuoB, C, D, E, F, and G constitute the peripheral sector of the complex. It depends on [4Fe-4S] cluster as a cofactor.

It is found in the cell inner membrane. It carries out the reaction a quinone + NADH + 5 H(+)(in) = a quinol + NAD(+) + 4 H(+)(out). In terms of biological role, NDH-1 shuttles electrons from NADH, via FMN and iron-sulfur (Fe-S) centers, to quinones in the respiratory chain. The immediate electron acceptor for the enzyme in this species is believed to be a menaquinone. Couples the redox reaction to proton translocation (for every two electrons transferred, four hydrogen ions are translocated across the cytoplasmic membrane), and thus conserves the redox energy in a proton gradient. The chain is NADH-quinone oxidoreductase subunit B from Phocaeicola vulgatus (strain ATCC 8482 / DSM 1447 / JCM 5826 / CCUG 4940 / NBRC 14291 / NCTC 11154) (Bacteroides vulgatus).